A 491-amino-acid polypeptide reads, in one-letter code: [Pyruvate dehydrogenase (acetyl-transferring)] kinase 2, mitochondrial (491 aa).

The region spanning 153-480 is the Histidine kinase domain; it reads PTIRTLEDAS…DVVLKLGNLM (328 aa). Residues 300–307, Asp341, 359–360, and 383–446 each bind ATP; these read EILRNTYE, SK, and DEVH…GIGL.

This sequence belongs to the PDK/BCKDK protein kinase family. As to quaternary structure, interacts with PKP1.

The protein localises to the mitochondrion matrix. The catalysed reaction is L-seryl-[pyruvate dehydrogenase E1 alpha subunit] + ATP = O-phospho-L-seryl-[pyruvate dehydrogenase E1 alpha subunit] + ADP + H(+). Its function is as follows. Inhibits the mitochondrial pyruvate dehydrogenase complex by phosphorylation of the E1 alpha subunit (PDA1), thus contributing to the regulation of glucose metabolism. The sequence is that of [Pyruvate dehydrogenase (acetyl-transferring)] kinase 2, mitochondrial from Saccharomyces cerevisiae (strain ATCC 204508 / S288c) (Baker's yeast).